Reading from the N-terminus, the 176-residue chain is NAD(P)H-quinone oxidoreductase subunit 6, chloroplastic (176 aa).

The next 5 membrane-spanning stretches (helical) occupy residues 10 to 30, 32 to 52, 61 to 81, 92 to 112, and 152 to 172; these read FLLV…VLLT, PIYS…FYIL, AQLL…VMFM, LWTI…VSLI, and FFLP…GAIA.

This sequence belongs to the complex I subunit 6 family. NDH is composed of at least 16 different subunits, 5 of which are encoded in the nucleus.

The protein resides in the plastid. Its subcellular location is the chloroplast thylakoid membrane. It catalyses the reaction a plastoquinone + NADH + (n+1) H(+)(in) = a plastoquinol + NAD(+) + n H(+)(out). The catalysed reaction is a plastoquinone + NADPH + (n+1) H(+)(in) = a plastoquinol + NADP(+) + n H(+)(out). NDH shuttles electrons from NAD(P)H:plastoquinone, via FMN and iron-sulfur (Fe-S) centers, to quinones in the photosynthetic chain and possibly in a chloroplast respiratory chain. The immediate electron acceptor for the enzyme in this species is believed to be plastoquinone. Couples the redox reaction to proton translocation, and thus conserves the redox energy in a proton gradient. In Gossypium hirsutum (Upland cotton), this protein is NAD(P)H-quinone oxidoreductase subunit 6, chloroplastic (ndhG).